Here is a 352-residue protein sequence, read N- to C-terminus: Photosystem II D2 protein 2 (352 aa).

Residues 40–60 (CAYLALGGWLTGTSFVTSWYT) form a helical membrane-spanning segment. A chlorophyll a-binding site is contributed by His-117. The chain crosses the membrane as a helical span at residues 124–140 (GFMLRQFEIARLVGVRP). Residues Gln-129 and Asn-142 each coordinate pheophytin a. Residues 152–165 (VFVSVFLMYPLGQS) traverse the membrane as a helical segment. His-197 contributes to the chlorophyll a binding site. Residues 207–227 (GALLCAIHGATVENTLFEDSE) form a helical membrane-spanning segment. 2 residues coordinate a plastoquinone: His-214 and Phe-261. Fe cation is bound at residue His-214. Residue His-268 coordinates Fe cation. Residues 278–294 (GLWMSSIGIVGLALNLR) traverse the membrane as a helical segment.

This sequence belongs to the reaction center PufL/M/PsbA/D family. PSII is composed of 1 copy each of membrane proteins PsbA, PsbB, PsbC, PsbD, PsbE, PsbF, PsbH, PsbI, PsbJ, PsbK, PsbL, PsbM, PsbT, PsbX, PsbY, PsbZ, Psb30/Ycf12, peripheral proteins PsbO, CyanoQ (PsbQ), PsbU, PsbV and a large number of cofactors. It forms dimeric complexes. The D1/D2 heterodimer binds P680, chlorophylls that are the primary electron donor of PSII, and subsequent electron acceptors. It shares a non-heme iron and each subunit binds pheophytin, quinone, additional chlorophylls, carotenoids and lipids. There is also a Cl(-1) ion associated with D1 and D2, which is required for oxygen evolution. The PSII complex binds additional chlorophylls, carotenoids and specific lipids. serves as cofactor.

The protein resides in the cellular thylakoid membrane. The enzyme catalyses 2 a plastoquinone + 4 hnu + 2 H2O = 2 a plastoquinol + O2. Photosystem II (PSII) is a light-driven water:plastoquinone oxidoreductase that uses light energy to abstract electrons from H(2)O, generating O(2) and a proton gradient subsequently used for ATP formation. It consists of a core antenna complex that captures photons, and an electron transfer chain that converts photonic excitation into a charge separation. The D1/D2 (PsbA/PsbD) reaction center heterodimer binds P680, the primary electron donor of PSII as well as several subsequent electron acceptors. D2 is needed for assembly of a stable PSII complex. The protein is Photosystem II D2 protein 2 of Synechococcus sp. (strain ATCC 27144 / PCC 6301 / SAUG 1402/1) (Anacystis nidulans).